The chain runs to 625 residues: Probable potassium transport system protein Kup (625 aa).

12 consecutive transmembrane segments (helical) span residues 10–30, 50–70, 102–122, 135–155, 172–192, 214–234, 251–271, 284–304, 340–360, 369–389, 397–417, and 422–442; these read LAAL…TSPL, LLGV…LKYV, YFPL…DSVI, LGVA…AILV, FGPV…VNII, GFLA…AEAL, FLIA…LLLL, LGAW…IIAS, IYIP…VIGF, AYGI…FFVI, LILC…LFSA, and LFHG…LMLT.

Belongs to the HAK/KUP transporter (TC 2.A.72) family.

The protein localises to the cell inner membrane. It catalyses the reaction K(+)(in) + H(+)(in) = K(+)(out) + H(+)(out). In terms of biological role, transport of potassium into the cell. Likely operates as a K(+):H(+) symporter. The chain is Probable potassium transport system protein Kup from Herminiimonas arsenicoxydans.